A 705-amino-acid chain; its full sequence is Elongation factor G (705 aa).

In terms of domain architecture, tr-type G spans 8–291 (EKVRNIGIMA…AVVEYLPSPI (284 aa)). GTP contacts are provided by residues 17–24 (AHIDAGKT), 90–94 (DTPGH), and 144–147 (NKMD).

The protein belongs to the TRAFAC class translation factor GTPase superfamily. Classic translation factor GTPase family. EF-G/EF-2 subfamily.

It is found in the cytoplasm. Its function is as follows. Catalyzes the GTP-dependent ribosomal translocation step during translation elongation. During this step, the ribosome changes from the pre-translocational (PRE) to the post-translocational (POST) state as the newly formed A-site-bound peptidyl-tRNA and P-site-bound deacylated tRNA move to the P and E sites, respectively. Catalyzes the coordinated movement of the two tRNA molecules, the mRNA and conformational changes in the ribosome. The chain is Elongation factor G from Chloroherpeton thalassium (strain ATCC 35110 / GB-78).